The sequence spans 278 residues: Small ribosomal subunit protein uS2 (278 aa).

The tract at residues 235–278 is disordered; it reads AEAAEEAPKRERKAKAAVKKERTKKEDDDALNANVAGKFAKDEE. The segment covering 252–261 has biased composition (basic and acidic residues); that stretch reads VKKERTKKED.

The protein belongs to the universal ribosomal protein uS2 family.

The protein is Small ribosomal subunit protein uS2 of Parabacteroides distasonis (strain ATCC 8503 / DSM 20701 / CIP 104284 / JCM 5825 / NCTC 11152).